The chain runs to 103 residues: Small ribosomal subunit protein uS10 (103 aa).

The protein belongs to the universal ribosomal protein uS10 family. As to quaternary structure, part of the 30S ribosomal subunit.

Involved in the binding of tRNA to the ribosomes. This chain is Small ribosomal subunit protein uS10, found in Magnetococcus marinus (strain ATCC BAA-1437 / JCM 17883 / MC-1).